Reading from the N-terminus, the 172-residue chain is Ribosome maturation factor RimM (172 aa).

A PRC barrel domain is found at 96–168; it reads EGEFYYHQII…RVDVELMEGL (73 aa).

The protein belongs to the RimM family. As to quaternary structure, binds ribosomal protein uS19.

The protein localises to the cytoplasm. In terms of biological role, an accessory protein needed during the final step in the assembly of 30S ribosomal subunit, possibly for assembly of the head region. Essential for efficient processing of 16S rRNA. May be needed both before and after RbfA during the maturation of 16S rRNA. It has affinity for free ribosomal 30S subunits but not for 70S ribosomes. The sequence is that of Ribosome maturation factor RimM from Streptococcus pyogenes serotype M28 (strain MGAS6180).